Here is a 103-residue protein sequence, read N- to C-terminus: OMEGA-ectatommitoxin(02)-Rm1d (103 aa).

An N-terminal signal peptide occupies residues 1–30; it reads MKDSYISIVIAYLMVTFILVSSMPIEGEKR. 3 disulfide bridges follow: cysteine 39–cysteine 54, cysteine 49–cysteine 70, and cysteine 72–cysteine 81. One can recognise an EGF-like domain in the interval 43-82; sequence LNDENYCFNGKCVHLVAQDEPGKPYYSCICDEFYIGERCG.

It belongs to the EGF domain peptide family. In terms of tissue distribution, expressed by the venom gland.

It is found in the secreted. In terms of biological role, ant peptide with probable defensive activity which acts as a potent agonist of the mammalian epidermal growth factor receptor (EGFR). Mimics, both structurally and functionally, vertebrate epidermal growth factor (EGF) peptide hormones. In vivo, intraplantar injection in mice causes long-lasting (several days) hypersensitivity of the injected paw to both mechanical and thermal stimuli. Its long-lasting effect is unusual for venom toxins whose effects are usually immediate. One possible explanation is that it would reduce the duration of a nest attack, discourage future attacks, or enhance the actions of subsequent exposure to other pain-inducing venom peptides. The protein is OMEGA-ectatommitoxin(02)-Rm1d of Rhytidoponera metallica (Australian green-headed ant).